We begin with the raw amino-acid sequence, 419 residues long: Serine--tRNA ligase (419 aa).

226–228 contacts L-serine; it reads TSE. ATP-binding positions include 257 to 259 and Val-273; that span reads RRE. Glu-280 contributes to the L-serine binding site. 344–347 provides a ligand contact to ATP; it reads ELTS. Residue Thr-379 coordinates L-serine.

The protein belongs to the class-II aminoacyl-tRNA synthetase family. Type-1 seryl-tRNA synthetase subfamily. As to quaternary structure, homodimer. The tRNA molecule binds across the dimer.

Its subcellular location is the cytoplasm. The enzyme catalyses tRNA(Ser) + L-serine + ATP = L-seryl-tRNA(Ser) + AMP + diphosphate + H(+). It catalyses the reaction tRNA(Sec) + L-serine + ATP = L-seryl-tRNA(Sec) + AMP + diphosphate + H(+). It functions in the pathway aminoacyl-tRNA biosynthesis; selenocysteinyl-tRNA(Sec) biosynthesis; L-seryl-tRNA(Sec) from L-serine and tRNA(Sec): step 1/1. Functionally, catalyzes the attachment of serine to tRNA(Ser). Is also able to aminoacylate tRNA(Sec) with serine, to form the misacylated tRNA L-seryl-tRNA(Sec), which will be further converted into selenocysteinyl-tRNA(Sec). The chain is Serine--tRNA ligase from Corynebacterium diphtheriae (strain ATCC 700971 / NCTC 13129 / Biotype gravis).